The chain runs to 712 residues: Ferric reductase transmembrane component 6 (712 aa).

A signal peptide spans 1–17; it reads MHRTLLFLTWLISLTKA. Topologically, residues 18 to 167 are vacuolar; that stretch reads FNIKLPHTEK…HAHAYNLDIS (150 aa). N-linked (GlcNAc...) asparagine glycans are attached at residues N89, N112, and N124. A helical membrane pass occupies residues 168 to 188; sequence SVYGAYLTYYFVIVGIIAVFF. At 189–244 the chain is on the cytoplasmic side; that stretch reads HMSHYNGLNRALFASRFVNYIRGHFVLPTFLVDKHANHFKFLNVEVFTGLMPNSLE. The helical transmembrane segment at 245–265 threads the bilayer; it reads AWIIFGYTLANIIFLSISYII. At 266-287 the chain is on the vacuolar side; it reads DPYNLIFNSHLSQFTRLLADRS. A Ferric oxidoreductase domain is found at 287 to 411; the sequence is SGILAFTQFP…YCCWQHVKIF (125 aa). The helical transmembrane segment at 288–308 threads the bilayer; sequence GILAFTQFPLIIIFTARNSFL. Residues 309 to 328 lie on the Cytoplasmic side of the membrane; the sequence is EFLTGVKFNSFISFHKWIGR. H323 and H337 together coordinate heme. The helical transmembrane segment at 329 to 349 threads the bilayer; it reads IMVLNATIHSLSYSLFAIINH. The Vacuolar portion of the chain corresponds to 350–360; sequence AFKISNKQLYW. The helical transmembrane segment at 361 to 381 threads the bilayer; sequence KFGIASITVLCVLLVLSLGIV. Topologically, residues 382 to 387 are cytoplasmic; that stretch reads RKRHYE. A helical transmembrane segment spans residues 388–408; it reads FFLYTHIILALLFFYCCWQHV. Heme is bound by residues H393 and H407. Topologically, residues 409–416 are vacuolar; the sequence is KIFNGWKE. In terms of domain architecture, FAD-binding FR-type spans 412 to 546; it reads NGWKEWIVVS…EGPYGPSNLH (135 aa). The helical transmembrane segment at 417-437 threads the bilayer; the sequence is WIVVSLLIWGLEKLFRIWNIL. At 438 to 712 the chain is on the cytoplasmic side; that stretch reads QFRFPKATLI…IEYFEEYQCW (275 aa). Residue 493–499 participates in FAD binding; that stretch reads HPFTIID. Residues 538 to 541 and 678 to 679 each bind NADP(+); these read GPYG and CG.

The protein belongs to the ferric reductase (FRE) family. FAD is required as a cofactor.

The protein resides in the vacuole membrane. The enzyme catalyses 2 a Fe(II)-siderophore + NADP(+) + H(+) = 2 a Fe(III)-siderophore + NADPH. Functionally, metalloreductase responsible for reducing vacuolar iron and copper prior to transport into the cytosol. Catalyzes the reduction of Fe(3+) to Fe(2+) and Cu(2+) to Cu(+), respectively, which can then be transported by the respective vacuolar efflux systems to the cytosol. The polypeptide is Ferric reductase transmembrane component 6 (FRE6) (Saccharomyces cerevisiae (strain ATCC 204508 / S288c) (Baker's yeast)).